A 731-amino-acid polypeptide reads, in one-letter code: E3 ubiquitin-protein ligase SMURF1 (731 aa).

The 120-residue stretch at 1 to 120 (MSNVVTRRGG…TGYQRLDLCK (120 aa)) folds into the C2 domain. Positions 210-235 (RVRGPEVREHVQTPQNRSHGFQSQDL) are disordered. A compositionally biased stretch (polar residues) spans 221-234 (QTPQNRSHGFQSQD). 2 WW domains span residues 233–266 (QDLP…DPRI) and 279–312 (GSLP…DPRL). The HECT domain maps to 394–731 (RPKDLKKRLM…VEETSGFAVE (338 aa)). Cysteine 699 acts as the Glycyl thioester intermediate in catalysis.

It is found in the cytoplasm. It localises to the cell membrane. The catalysed reaction is S-ubiquitinyl-[E2 ubiquitin-conjugating enzyme]-L-cysteine + [acceptor protein]-L-lysine = [E2 ubiquitin-conjugating enzyme]-L-cysteine + N(6)-ubiquitinyl-[acceptor protein]-L-lysine.. It functions in the pathway protein modification; protein ubiquitination. Its function is as follows. E3 ubiquitin-protein ligase that acts as a negative regulator of BMP signaling pathway. Mediates ubiquitination and degradation of smad1 and smad5, 2 receptor-regulated SMADs specific for the BMP pathway. Promotes ubiquitination and subsequent proteasomal degradation of TRAF family members and rhoa. May play a role in dendrite formation by melanocytes. The sequence is that of E3 ubiquitin-protein ligase SMURF1 (smurf1) from Xenopus laevis (African clawed frog).